The following is a 136-amino-acid chain: MQFSTVASIAAIAAVASAASNITTATVTEESTTLVTITSCEDHVCSETVSPALVSTATVTVNDVITQYTTWCPLPTTEAPKNTTSPAPTEKPTEKPTEKPTQQGSSTQTVTSYTGAAVKALPAAGALLAGAAALLL.

An N-terminal signal peptide occupies residues 1–18 (MQFSTVASIAAIAAVASA). Residues asparagine 21 and asparagine 82 are each glycosylated (N-linked (GlcNAc...) asparagine). The segment at 73 to 110 (PLPTTEAPKNTTSPAPTEKPTEKPTEKPTQQGSSTQTV) is disordered. The span at 99-110 (KPTQQGSSTQTV) shows a compositional bias: low complexity. Glycine 115 carries the GPI-anchor amidated glycine lipid modification. A propeptide spans 116 to 136 (AAVKALPAAGALLAGAAALLL) (removed in mature form).

This sequence belongs to the PGA59 family. The GPI-anchor is attached to the protein in the endoplasmic reticulum and serves to target the protein to the cell surface. There, the glucosamine-inositol phospholipid moiety is cleaved off and the GPI-modified mannoprotein is covalently attached via its lipidless GPI glycan remnant to the 1,6-beta-glucan of the outer cell wall layer.

It localises to the secreted. Its subcellular location is the cell wall. It is found in the membrane. Its function is as follows. Cell wall protein necessary for cell wall integrity. The polypeptide is Putative covalently bound cell wall protein 22 (CCW22) (Saccharomyces cerevisiae (strain ATCC 204508 / S288c) (Baker's yeast)).